A 622-amino-acid chain; its full sequence is Probable potassium transport system protein Kup (622 aa).

12 helical membrane passes run 9-29, 52-72, 101-121, 137-157, 169-189, 213-233, 247-267, 287-309, 337-357, 363-383, 396-416, and 419-439; these read LPAV…TSPL, FLSL…LAFV, VLLV…VITP, PALT…LFVI, FGPV…ISIF, VAFF…ALYA, WFTV…ALIL, FPMV…SGVF, IYIP…VVTF, LAAA…ILAC, VVKI…LANV, and FFAG…VMAT.

It belongs to the HAK/KUP transporter (TC 2.A.72) family.

The protein localises to the cell inner membrane. It carries out the reaction K(+)(in) + H(+)(in) = K(+)(out) + H(+)(out). Transport of potassium into the cell. Likely operates as a K(+):H(+) symporter. The protein is Probable potassium transport system protein Kup of Tolumonas auensis (strain DSM 9187 / NBRC 110442 / TA 4).